The primary structure comprises 311 residues: tRNA dimethylallyltransferase (311 aa).

10–17 contacts ATP; sequence GPTASGKT. A substrate-binding site is contributed by 12-17; the sequence is TASGKT. Interaction with substrate tRNA regions lie at residues 35–38, 159–163, and 240–245; these read DSAL, QRINR, and RCVGYR.

The protein belongs to the IPP transferase family. In terms of assembly, monomer. The cofactor is Mg(2+).

It catalyses the reaction adenosine(37) in tRNA + dimethylallyl diphosphate = N(6)-dimethylallyladenosine(37) in tRNA + diphosphate. Catalyzes the transfer of a dimethylallyl group onto the adenine at position 37 in tRNAs that read codons beginning with uridine, leading to the formation of N6-(dimethylallyl)adenosine (i(6)A). The polypeptide is tRNA dimethylallyltransferase (Haemophilus influenzae (strain 86-028NP)).